The primary structure comprises 837 residues: Tuftelin-interacting protein 11 (837 aa).

Basic and acidic residues-rich tracts occupy residues 1-13 (MSLS…GEGR) and 50-64 (TYGV…DERP). Disordered regions lie at residues 1–21 (MSLS…DDER) and 50–136 (TYGV…AGGT). Residues 1 to 50 (MSLSHLYRDGEGRVDDDDDERENFEITDWDLQNEFNPNRQRHWQTKEEAT) are required for interaction with DHX15. 3 positions are modified to phosphoserine: Ser2, Ser59, and Ser98. Acidic residues predominate over residues 91 to 102 (EEAELDDSEDEE). Basic and acidic residues predominate over residues 103-116 (KPGKQEELPKDLGP). Position 144 is a phosphoserine (Ser144). One can recognise a G-patch domain in the interval 149–195 (TKGIGQKLLQKMGYVPGRGLGKNAQGIINPIEAKQRKGKGAVGAYGS). Residues 183–236 (QRKGKGAVGAYGSERTTQSLQDFPVVDSEEEAEEEFQKELSQWRKDPSGSKKKP) form a disordered region. Ser210 bears the Phosphoserine mark. Residues 217 to 231 (EFQKELSQWRKDPSG) are compositionally biased toward basic and acidic residues. Residues 700-705 (VKDKFN) carry the Nuclear localization signal motif. The segment at 710–734 (IMNRAVSSNVGAYMQPGARENIAYL) is required for nuclear speckle localization.

This sequence belongs to the TFP11/STIP family. Identified in the spliceosome C complex. Found in the Intron Large (IL) complex, a post-mRNA release spliceosomal complex containing the excised intron, U2, U5 and U6 snRNPs, and splicing factors. Interacts with TUFT1. Interacts with DHX15; indicative for a recruitment of DHX15 to the IL complex. Interacts with GCFC2.

It localises to the cytoplasm. Its subcellular location is the nucleus. In terms of biological role, involved in pre-mRNA splicing, specifically in spliceosome disassembly during late-stage splicing events. Intron turnover seems to proceed through reactions in two lariat-intron associated complexes termed Intron Large (IL) and Intron Small (IS). In cooperation with DHX15 seems to mediate the transition of the U2, U5 and U6 snRNP-containing IL complex to the snRNP-free IS complex leading to efficient debranching and turnover of excised introns. May play a role in the differentiation of ameloblasts and odontoblasts or in the forming of the enamel extracellular matrix. The polypeptide is Tuftelin-interacting protein 11 (TFIP11) (Oryctolagus cuniculus (Rabbit)).